The following is a 32-amino-acid chain: Fimbrin sef21 (32 aa).

It localises to the fimbrium. This Salmonella enteritidis protein is Fimbrin sef21.